Here is a 79-residue protein sequence, read N- to C-terminus: Protein AC4 (79 aa).

Disordered stretches follow at residues 1–24 (MCSY…SPQP) and 36–79 (LNPA…MPRR). The span at 38–47 (PAPTSSPTST) shows a compositional bias: low complexity. Residues 48–61 (RTEIQLNGENSRST) show a composition bias toward polar residues.

The protein belongs to the geminiviridae protein AC4/C4 family.

Its function is as follows. Pathogenicity determinant. May act as a suppressor of RNA-mediated gene silencing, also known as post-transcriptional gene silencing (PTGS), a mechanism of plant viral defense that limits the accumulation of viral RNAs. The polypeptide is Protein AC4 (Abutilon (Upland cotton)).